The primary structure comprises 400 residues: WD repeat and FYVE domain-containing protein 2 (400 aa).

6 WD repeats span residues 22–61 (GSQE…QYWP), 66–105 (AMPS…NKMT), 112–150 (AHQS…QRLG), 153–192 (RTSA…CTLV), 197–236 (GHTG…GTAI), and 240–279 (GHND…QETP). The segment at 281-352 (WLDSDSCQKC…VCDSCHEAIT (72 aa)) adopts an FYVE-type zinc-finger fold. Residues Cys287, Cys290, Cys314, Cys317, Cys322, Cys325, Cys344, and Cys347 each coordinate Zn(2+). A WD 7 repeat occupies 364–399 (DSKHNIVHVHFDATRGWLLTSGTDKVIKLWDMTPVV).

Homodimer. Interacts (via WD repeats 1-3) with AKT1, AKT2, PRKCZ and PRKCI. Interacts with VAMP2. Forms a complex with VAMP2 and PRKCZ. Interacts with FOXO1. Forms a complex with AKT1 and FOXO1.

The protein resides in the endosome. It localises to the early endosome. The protein localises to the cytoplasm. In terms of biological role, acts in an adapter protein-like fashion to mediate the interaction between the kinase PRKCZ and its substrate VAMP2 and increases the PRKCZ-dependent phosphorylation of VAMP2. Positively regulates adipocyte differentiation, by facilitating the phosphorylation and thus inactivation of the anti-adipogenetic transcription factor FOXO1 by the kinase AKT1. Plays a role in endosomal control of AKT2 signaling; required for insulin-stimulated AKT2 phosphorylation and glucose uptake and insulin-stimulated phosphorylation of AKT2 substrates. Participates in transferrin receptor endocytosis. In Homo sapiens (Human), this protein is WD repeat and FYVE domain-containing protein 2 (WDFY2).